The chain runs to 883 residues: N,N'-diacetylchitobiase (883 aa).

A signal peptide spans 1 to 17; it reads MLKHSLIAASVITTLAG. A lipid anchor (N-palmitoyl cysteine) is attached at cysteine 18. Cysteine 18 is lipidated: S-diacylglycerol cysteine. Cystine bridges form between cysteine 54–cysteine 64, cysteine 394–cysteine 402, and cysteine 502–cysteine 577. Catalysis depends on glutamate 537, which acts as the Proton donor.

It belongs to the glycosyl hydrolase 20 family. In terms of processing, this protein is probably a lipoprotein, its processing is inhibited by globomycin.

The protein localises to the cell outer membrane. The enzyme catalyses Hydrolysis of terminal non-reducing N-acetyl-D-hexosamine residues in N-acetyl-beta-D-hexosaminides.. It participates in glycan degradation; chitin degradation. Functionally, hydrolysis of terminal, non-reducing N-acetyl-beta-D-glucosamine residues in chitobiose and higher analogs, and in glycoproteins. This is N,N'-diacetylchitobiase (chb) from Vibrio harveyi (Beneckea harveyi).